The primary structure comprises 149 residues: Aquaporin-like protein 2 (149 aa).

The tract at residues 1–35 is disordered; the sequence is MSNESNDLEKNISHLDPTGVDNAYIPPEQPETKHS. Residues 1–47 lie on the Cytoplasmic side of the membrane; that stretch reads MSNESNDLEKNISHLDPTGVDNAYIPPEQPETKHSRFNIDRDTLRNH. A helical membrane pass occupies residues 48–68; sequence FIAAVGEFCGTFMFLWCAYVI. Residues 69–89 lie on the Extracellular side of the membrane; sequence CNVANHDVALTTEPEGSHPGQ. The chain crosses the membrane as a helical span at residues 90–110; it reads LIMIALGFGFSVMFSIWCFWW. The Cytoplasmic segment spans residues 111 to 149; sequence GFEPSRFSLFVFGQSHLSSQMCSDVVSSDHCWDGCWWCR.

This sequence belongs to the MIP/aquaporin (TC 1.A.8) family.

Its subcellular location is the endoplasmic reticulum membrane. The protein resides in the cell membrane. Functionally, water channel required to facilitate the transport of water across membranes. Involved in freeze tolerance, osmotolerance and cell flocculation in liquid cultures. Is non-functional in most laboratory strains. The chain is Aquaporin-like protein 2 (AQY2-2) from Saccharomyces cerevisiae (strain RM11-1a) (Baker's yeast).